Here is a 417-residue protein sequence, read N- to C-terminus: Gamma-glutamyl phosphate reductase (417 aa).

Belongs to the gamma-glutamyl phosphate reductase family.

It localises to the cytoplasm. The enzyme catalyses L-glutamate 5-semialdehyde + phosphate + NADP(+) = L-glutamyl 5-phosphate + NADPH + H(+). Its pathway is amino-acid biosynthesis; L-proline biosynthesis; L-glutamate 5-semialdehyde from L-glutamate: step 2/2. In terms of biological role, catalyzes the NADPH-dependent reduction of L-glutamate 5-phosphate into L-glutamate 5-semialdehyde and phosphate. The product spontaneously undergoes cyclization to form 1-pyrroline-5-carboxylate. The chain is Gamma-glutamyl phosphate reductase from Escherichia coli O8 (strain IAI1).